A 407-amino-acid polypeptide reads, in one-letter code: Phospholipid-transporting ATPase accessory subunit CDC50 (407 aa).

The interval 1-33 (MAPRRRRGAGQDGSDDGRSDSDAPKNRPPNTAF) is disordered. Topologically, residues 1-48 (MAPRRRRGAGQDGSDDGRSDSDAPKNRPPNTAFRQQRMRAWQCVLTPK) are cytoplasmic. Residues 15–25 (DDGRSDSDAPK) show a composition bias toward basic and acidic residues. A helical transmembrane segment spans residues 49–69 (LIVTVFSILAAIYLGFGAWLT). Residues 70–359 (YLAHTVRDLK…TMGSRNIWPG (290 aa)) are Extracellular-facing. An intrachain disulfide couples Cys-85 to Cys-139. Residues Asn-131 and Asn-189 are each glycosylated (N-linked (GlcNAc...) asparagine). Cys-193 and Cys-210 are oxidised to a cystine. N-linked (GlcNAc...) asparagine glycosylation is found at Asn-219, Asn-232, Asn-241, and Asn-314. Residues 360 to 380 (IIFLIVGGICLVLDIYFILSF) form a helical membrane-spanning segment. The Cytoplasmic segment spans residues 381-407 (FIWRPRKLGDPSYLSWNQPSAPGGHSS).

It belongs to the CDC50/LEM3 family. Component of a flippase complex consisting of DNF1 and CDC50. Interacts with DNF1; the interaction is direct.

It localises to the cell membrane. Functionally, accessory component of a P4-ATPase flippase complex which catalyzes the hydrolysis of ATP coupled to the transport of phosphatidylcholine and phosphatidylserine from the lumen to the cytosolic leaflet of membranes and ensures the maintenance of asymmetric distribution of phospholipids. The sequence is that of Phospholipid-transporting ATPase accessory subunit CDC50 from Chaetomium thermophilum (strain DSM 1495 / CBS 144.50 / IMI 039719) (Thermochaetoides thermophila).